Consider the following 52-residue polypeptide: Ovomucoid (52 aa).

One can recognise a Kazal-like domain in the interval 2 to 52 (VDCSDYPKPVCTLEEMPLCGSDNKTYGNKCNFCNAVVDSNGTLTLSHFGKC). 3 disulfides stabilise this stretch: cysteine 4–cysteine 34, cysteine 12–cysteine 31, and cysteine 20–cysteine 52. Asparagine 41 carries N-linked (GlcNAc...) asparagine glycosylation.

The protein localises to the secreted. The polypeptide is Ovomucoid (Scythrops novaehollandiae (Channel-billed cuckoo)).